We begin with the raw amino-acid sequence, 189 residues long: Threonylcarbamoyl-AMP synthase (189 aa).

In terms of domain architecture, YrdC-like spans 9–189 (ASAQRKLSVY…IDGETGKRLR (181 aa)).

It belongs to the SUA5 family. TsaC subfamily.

It localises to the cytoplasm. It catalyses the reaction L-threonine + hydrogencarbonate + ATP = L-threonylcarbamoyladenylate + diphosphate + H2O. Required for the formation of a threonylcarbamoyl group on adenosine at position 37 (t(6)A37) in tRNAs that read codons beginning with adenine. Catalyzes the conversion of L-threonine, HCO(3)(-)/CO(2) and ATP to give threonylcarbamoyl-AMP (TC-AMP) as the acyladenylate intermediate, with the release of diphosphate. The chain is Threonylcarbamoyl-AMP synthase from Neisseria meningitidis serogroup C (strain 053442).